The following is a 485-amino-acid chain: Expansin-like protein 8 (485 aa).

An N-terminal signal peptide occupies residues 1–21; it reads MRISIILLSLLFLSLHSLIKA. The Extracellular segment spans residues 22-464; sequence DITKLSVCGS…QSGHHASSNT (443 aa). The Expansin-like EG45 domain occupies 26–139; it reads LSVCGSARAV…QIVSCGYSGN (114 aa). 2 disulfide bridges follow: Cys29–Cys70 and Cys73–Cys134. Asn117 and Asn365 each carry an N-linked (GlcNAc...) asparagine glycan. The segment at 408–436 is disordered; the sequence is EVNNKPSTTSGTGTTSSKPSSSSGGVSGG. The segment covering 414–431 has biased composition (low complexity); it reads STTSGTGTTSSKPSSSSG. N-linked (GlcNAc...) asparagine glycosylation is present at Asn454. A helical membrane pass occupies residues 465 to 485; the sequence is NILLPTTFVFFISITILSLLF.

Belongs to the expansin family. Expansin A subfamily.

The protein resides in the membrane. Its function is as follows. May serve to lubricate the movement of the cellulose microfibrils during cell growth and wall extension and/or may serve to maintain the fluid state of the slug cell wall. This is Expansin-like protein 8 (expl8) from Dictyostelium discoideum (Social amoeba).